Reading from the N-terminus, the 108-residue chain is UPF0102 protein Shewana3_3881 (108 aa).

Belongs to the UPF0102 family.

The sequence is that of UPF0102 protein Shewana3_3881 from Shewanella sp. (strain ANA-3).